We begin with the raw amino-acid sequence, 166 residues long: Crossover junction endodeoxyribonuclease RuvC (166 aa).

Residues Asp-9, Glu-70, and Asp-144 contribute to the active site. Residues Asp-9, Glu-70, and Asp-144 each coordinate Mg(2+).

Belongs to the RuvC family. As to quaternary structure, homodimer which binds Holliday junction (HJ) DNA. The HJ becomes 2-fold symmetrical on binding to RuvC with unstacked arms; it has a different conformation from HJ DNA in complex with RuvA. In the full resolvosome a probable DNA-RuvA(4)-RuvB(12)-RuvC(2) complex forms which resolves the HJ. It depends on Mg(2+) as a cofactor.

It is found in the cytoplasm. The enzyme catalyses Endonucleolytic cleavage at a junction such as a reciprocal single-stranded crossover between two homologous DNA duplexes (Holliday junction).. Its function is as follows. The RuvA-RuvB-RuvC complex processes Holliday junction (HJ) DNA during genetic recombination and DNA repair. Endonuclease that resolves HJ intermediates. Cleaves cruciform DNA by making single-stranded nicks across the HJ at symmetrical positions within the homologous arms, yielding a 5'-phosphate and a 3'-hydroxyl group; requires a central core of homology in the junction. The consensus cleavage sequence is 5'-(A/T)TT(C/G)-3'. Cleavage occurs on the 3'-side of the TT dinucleotide at the point of strand exchange. HJ branch migration catalyzed by RuvA-RuvB allows RuvC to scan DNA until it finds its consensus sequence, where it cleaves and resolves the cruciform DNA. In Neorickettsia sennetsu (strain ATCC VR-367 / Miyayama) (Ehrlichia sennetsu), this protein is Crossover junction endodeoxyribonuclease RuvC.